A 443-amino-acid chain; its full sequence is EP1-like glycoprotein 4 (443 aa).

A signal peptide spans 1–22 (MEFSTTLALFFTLSIFLVGAQA). In terms of domain architecture, Bulb-type lectin spans 29–159 (QFRVVNEGGY…NGKFVWQSFD (131 aa)). N-linked (GlcNAc...) asparagine glycosylation is found at N66, N102, N258, and N269. The WD repeat unit spans residues 254–296 (GSQFNVSTFLSRPKHNATLSFLRLESDGNIRVWSYSTLATSTA). Positions 356 to 433 (CDPKTFHYFK…TSLVAYVKAP (78 aa)) constitute a PAN domain. 2 disulfide bridges follow: C387–C409 and C391–C397. N434 carries N-linked (GlcNAc...) asparagine glycosylation.

Its subcellular location is the secreted. It is found in the cell wall. In Arabidopsis thaliana (Mouse-ear cress), this protein is EP1-like glycoprotein 4.